A 640-amino-acid chain; its full sequence is Threonine--tRNA ligase (640 aa).

Residues 1–59 (MKIKVVLPDGSEREYEKGTKPMEIAREVGIKKVIGAVVDEELWDLKRPLERDCRIRFVT) form the TGS domain. Positions 240-531 (DHRKLGPQLE…LIEHFAGAFP (292 aa)) are catalytic. 3 residues coordinate Zn(2+): C332, H383, and H508.

The protein belongs to the class-II aminoacyl-tRNA synthetase family. In terms of assembly, homodimer. Zn(2+) serves as cofactor.

The protein resides in the cytoplasm. It catalyses the reaction tRNA(Thr) + L-threonine + ATP = L-threonyl-tRNA(Thr) + AMP + diphosphate + H(+). In terms of biological role, catalyzes the attachment of threonine to tRNA(Thr) in a two-step reaction: L-threonine is first activated by ATP to form Thr-AMP and then transferred to the acceptor end of tRNA(Thr). Also edits incorrectly charged L-seryl-tRNA(Thr). The protein is Threonine--tRNA ligase of Thermotoga neapolitana (strain ATCC 49049 / DSM 4359 / NBRC 107923 / NS-E).